The sequence spans 334 residues: Ornithine carbamoyltransferase (334 aa).

Residues Ser56–Thr59, Gln83, Arg107, and His134–Gln137 each bind carbamoyl phosphate. L-ornithine is bound by residues Asn168, Asp232, and Ser236 to Met237. Carbamoyl phosphate contacts are provided by residues Cys274 to Leu275 and Arg320.

The protein belongs to the aspartate/ornithine carbamoyltransferase superfamily. OTCase family.

The protein resides in the cytoplasm. It catalyses the reaction carbamoyl phosphate + L-ornithine = L-citrulline + phosphate + H(+). It participates in amino-acid biosynthesis; L-arginine biosynthesis; L-arginine from L-ornithine and carbamoyl phosphate: step 1/3. In terms of biological role, reversibly catalyzes the transfer of the carbamoyl group from carbamoyl phosphate (CP) to the N(epsilon) atom of ornithine (ORN) to produce L-citrulline. In Escherichia coli O157:H7, this protein is Ornithine carbamoyltransferase.